Reading from the N-terminus, the 259-residue chain is Protein YIF1B (259 aa).

An N-acetylmethionine modification is found at Met1. The segment at 1–61 (MHATGLAAPA…QPSPGSLGYP (61 aa)) is disordered. At 9–153 (PAGTPRLRKW…APRFDINAPD (145 aa)) the chain is on the cytoplasmic side. Thr12 carries the post-translational modification Phosphothreonine. The span at 14–24 (RLRKWPSKRRV) shows a compositional bias: basic residues. Phosphoserine is present on Ser64. Residues 154-174 (LYIPAMAFITYILVAGLALGT) form a helical membrane-spanning segment. Topologically, residues 175–186 (QDRMIGGVLTGL) are extracellular. Residues 187-207 (LFGKIGYYLVLAWCCVSIFVF) traverse the membrane as a helical segment. Over 208–237 (MIRTLRLKILAQAAAEGVPVRGARNQLRMY) the chain is Cytoplasmic. The helical transmembrane segment at 238–258 (LTMAVAAAQPVLMYWLTFHLV) threads the bilayer. Residue Arg259 is a topological domain, extracellular.

The protein belongs to the YIF1 family. Interacts with HTR1A (via C-terminus). Interacts with ABCB9 (via TMD0); this interaction allows (but is not essential) the ER-to-Golgi trafficking and strongly depends on a salt bridge within TMD0. Highly expressed in brain. Expressed in heart, kidney, and lung and lower levels in spleen, muscle, and intestine (at protein level). Expressed in serotoninergic neurons (at protein level).

The protein resides in the endoplasmic reticulum membrane. It is found in the golgi apparatus membrane. The protein localises to the endoplasmic reticulum-Golgi intermediate compartment membrane. Functionally, functions in endoplasmic reticulum to Golgi vesicle-mediated transport and regulates the proper organization of the endoplasmic reticulum and the Golgi. Plays a key role in targeting to neuronal dendrites receptors such as HTR1A. Plays also a role in primary cilium and sperm flagellum assembly probably through protein transport to these compartments. The chain is Protein YIF1B from Rattus norvegicus (Rat).